The following is a 455-amino-acid chain: Transcriptional regulatory protein FlbD (455 aa).

The Response regulatory domain maps to 2–114 (RLLVVGKLNG…LIAAVLAAVT (113 aa)). The Sigma-54 factor interaction domain occupies 120-349 (MVVRDPAMEQ…LENAMHRAVL (230 aa)). ATP contacts are provided by residues 148–155 (GESGSGKE) and 211–220 (ADGGTLLLDE). The segment at residues 416 to 435 (RTHAANILGISIRTLRNKLK) is a DNA-binding region (H-T-H motif).

The protein resides in the cytoplasm. Functionally, activation of sigma-54-dependent flagellar gene promoters and strong negative autoregulatory effects on its own promoter. The synthesis and function of FlbD in C.crescentus is controlled by an internal cell-cycle clock. The protein is Transcriptional regulatory protein FlbD (flbD) of Caulobacter vibrioides (strain ATCC 19089 / CIP 103742 / CB 15) (Caulobacter crescentus).